We begin with the raw amino-acid sequence, 188 residues long: Acireductone dioxygenase (188 aa).

Fe(2+) contacts are provided by His97, His99, Glu103, and His141. Ni(2+) contacts are provided by His97, His99, Glu103, and His141.

This sequence belongs to the acireductone dioxygenase (ARD) family. As to quaternary structure, monomer. It depends on Fe(2+) as a cofactor. Ni(2+) is required as a cofactor.

It carries out the reaction 1,2-dihydroxy-5-(methylsulfanyl)pent-1-en-3-one + O2 = 3-(methylsulfanyl)propanoate + CO + formate + 2 H(+). It catalyses the reaction 1,2-dihydroxy-5-(methylsulfanyl)pent-1-en-3-one + O2 = 4-methylsulfanyl-2-oxobutanoate + formate + 2 H(+). It functions in the pathway amino-acid biosynthesis; L-methionine biosynthesis via salvage pathway; L-methionine from S-methyl-5-thio-alpha-D-ribose 1-phosphate: step 5/6. Functionally, catalyzes 2 different reactions between oxygen and the acireductone 1,2-dihydroxy-3-keto-5-methylthiopentene (DHK-MTPene) depending upon the metal bound in the active site. Fe-containing acireductone dioxygenase (Fe-ARD) produces formate and 2-keto-4-methylthiobutyrate (KMTB), the alpha-ketoacid precursor of methionine in the methionine recycle pathway. Ni-containing acireductone dioxygenase (Ni-ARD) produces methylthiopropionate, carbon monoxide and formate, and does not lie on the methionine recycle pathway. The sequence is that of Acireductone dioxygenase from Xanthomonas axonopodis pv. citri (strain 306).